Here is a 632-residue protein sequence, read N- to C-terminus: Probable potassium transport system protein Kup 2 (632 aa).

A run of 12 helical transmembrane segments spans residues 19 to 39 (FWGL…TSPL), 58 to 78 (MIVL…VTAK), 110 to 130 (MFLM…SMIT), 147 to 167 (PALE…LFAV), 178 to 198 (AFGP…IVHI), 216 to 236 (FLLS…LAVT), 257 to 277 (WLFF…ALVL), 290 to 310 (MVPE…TVIA), 347 to 367 (IYLP…VLLF), 377 to 397 (YGIA…VVIW), 404 to 424 (AAVA…FFSA), and 429 to 449 (LFEG…TIWT).

This sequence belongs to the HAK/KUP transporter (TC 2.A.72) family.

The protein resides in the cell inner membrane. The enzyme catalyses K(+)(in) + H(+)(in) = K(+)(out) + H(+)(out). Functionally, transport of potassium into the cell. Likely operates as a K(+):H(+) symporter. This is Probable potassium transport system protein Kup 2 from Bradyrhizobium sp. (strain BTAi1 / ATCC BAA-1182).